We begin with the raw amino-acid sequence, 269 residues long: NAD kinase (269 aa).

Residue D45 is the Proton acceptor of the active site. NAD(+)-binding positions include 45 to 46, 122 to 123, R149, D151, and A186; these read DG and NE.

The protein belongs to the NAD kinase family. It depends on a divalent metal cation as a cofactor.

It localises to the cytoplasm. It carries out the reaction NAD(+) + ATP = ADP + NADP(+) + H(+). Functionally, involved in the regulation of the intracellular balance of NAD and NADP, and is a key enzyme in the biosynthesis of NADP. Catalyzes specifically the phosphorylation on 2'-hydroxyl of the adenosine moiety of NAD to yield NADP. This Staphylococcus aureus (strain Mu3 / ATCC 700698) protein is NAD kinase.